The sequence spans 172 residues: Large ribosomal subunit protein uL10 (172 aa).

Belongs to the universal ribosomal protein uL10 family. In terms of assembly, part of the ribosomal stalk of the 50S ribosomal subunit. The N-terminus interacts with L11 and the large rRNA to form the base of the stalk. The C-terminus forms an elongated spine to which L12 dimers bind in a sequential fashion forming a multimeric L10(L12)X complex.

Functionally, forms part of the ribosomal stalk, playing a central role in the interaction of the ribosome with GTP-bound translation factors. This chain is Large ribosomal subunit protein uL10, found in Chlorobium limicola (strain DSM 245 / NBRC 103803 / 6330).